Consider the following 266-residue polypeptide: Transcription regulator FGM4 (266 aa).

The disordered stretch occupies residues 17-36; the sequence is KTQNRLAKRKSRIHAGKQQG. Residues 18 to 31 are compositionally biased toward basic residues; it reads TQNRLAKRKSRIHA. ANK repeat units follow at residues 183–212 and 216–245; these read KPGS…NVNE and AGYS…DWSY.

Its subcellular location is the nucleus. In terms of biological role, transcription regulator; part of the Fg3_54/C64 gene cluster that mediates the biosynthesis of the octapeptide fusaoctaxin A, a virulence factor that is required for cell-to-cell invasiveness of plant host. Positively regulates the expression the Fg3_54/C64 gene cluster. The chain is Transcription regulator FGM4 from Gibberella zeae (strain ATCC MYA-4620 / CBS 123657 / FGSC 9075 / NRRL 31084 / PH-1) (Wheat head blight fungus).